We begin with the raw amino-acid sequence, 169 residues long: Putative tRNA (cytidine(34)-2'-O)-methyltransferase (169 aa).

Residues Ile79, Gly104, Ile125, and Ser133 each contribute to the S-adenosyl-L-methionine site.

Belongs to the class IV-like SAM-binding methyltransferase superfamily. RNA methyltransferase TrmH family. TrmL subfamily.

The protein localises to the cytoplasm. It catalyses the reaction cytidine(34) in tRNA + S-adenosyl-L-methionine = 2'-O-methylcytidine(34) in tRNA + S-adenosyl-L-homocysteine + H(+). The enzyme catalyses 5-carboxymethylaminomethyluridine(34) in tRNA(Leu) + S-adenosyl-L-methionine = 5-carboxymethylaminomethyl-2'-O-methyluridine(34) in tRNA(Leu) + S-adenosyl-L-homocysteine + H(+). In terms of biological role, could methylate the ribose at the nucleotide 34 wobble position in tRNA. The protein is Putative tRNA (cytidine(34)-2'-O)-methyltransferase of Listeria innocua serovar 6a (strain ATCC BAA-680 / CLIP 11262).